The primary structure comprises 297 residues: uncharacterized protein (297 aa).

The next 2 helical transmembrane spans lie at 17–37 (LALSGGGFYGFAVVGALKEIF) and 48–68 (TISGVSVGSIIATMLAIGYSI). Residues 17–196 (LALSGGGFYG…TLNYPITLFD (180 aa)) form the PNPLA domain. Residues 21 to 26 (GGGFYG) carry the GXGXXG motif. The GXSXG motif lies at 51 to 55 (GVSVG). Ser-53 functions as the Nucleophile in the catalytic mechanism. Asn-122 is a glycosylation site (N-linked (GlcNAc...) asparagine; by host). Asp-183 serves as the catalytic Proton acceptor. Positions 183–185 (DGG) match the DGA/G motif. A glycan (N-linked (GlcNAc...) asparagine; by host) is linked at Asn-239.

The protein localises to the membrane. Probable lipid hydrolase. This is an uncharacterized protein from Acanthamoeba polyphaga mimivirus (APMV).